Reading from the N-terminus, the 526-residue chain is Nitrogenase iron-iron protein alpha chain (526 aa).

[8Fe-7S] cluster contacts are provided by cysteine 49, cysteine 75, and cysteine 138. [8Fe-9S-C-homocitryl] cluster-binding residues include cysteine 257 and histidine 423. The interval 507–526 is disordered; it reads RNQPMPPSRKLRDAVQPAAE.

It belongs to the NifD/NifK/NifE/NifN family. Hexamer of two alpha, two beta, and two delta chains. Requires [8Fe-7S] cluster as cofactor. It depends on [8Fe-9S-C-homocitryl] cluster as a cofactor.

The catalysed reaction is N2 + 8 reduced [2Fe-2S]-[ferredoxin] + 16 ATP + 16 H2O = H2 + 8 oxidized [2Fe-2S]-[ferredoxin] + 2 NH4(+) + 16 ADP + 16 phosphate + 6 H(+). Its function is as follows. This iron-iron protein is part of the nitrogenase complex that catalyzes the key enzymatic reactions in nitrogen fixation. Other nitrogenase complexes utilize a molybdenum-iron protein or a vanadium-iron protein. The polypeptide is Nitrogenase iron-iron protein alpha chain (anfD) (Rhodobacter capsulatus (Rhodopseudomonas capsulata)).